A 369-amino-acid polypeptide reads, in one-letter code: Flagellar P-ring protein (369 aa).

Positions 1–24 (MSKTISLLKFIICILISLCSFTYA) are cleaved as a signal peptide.

It belongs to the FlgI family. In terms of assembly, the basal body constitutes a major portion of the flagellar organelle and consists of four rings (L,P,S, and M) mounted on a central rod.

It localises to the bacterial flagellum basal body. Its function is as follows. Assembles around the rod to form the L-ring and probably protects the motor/basal body from shearing forces during rotation. This Buchnera aphidicola subsp. Schizaphis graminum (strain Sg) protein is Flagellar P-ring protein.